Reading from the N-terminus, the 451-residue chain is AAA-ATPase At3g28570, mitochondrial (451 aa).

A mitochondrion-targeting transit peptide spans 1–48 (MFAENLTRIGSNVAGLFFVWSTLKRYFPRQIQQLLFNAIQRIPIFKRL). 243–250 (GPPGTGKS) is an ATP binding site.

The protein belongs to the AAA ATPase family. BCS1 subfamily. It depends on Mg(2+) as a cofactor.

It is found in the mitochondrion. It catalyses the reaction ATP + H2O = ADP + phosphate + H(+). The protein is AAA-ATPase At3g28570, mitochondrial of Arabidopsis thaliana (Mouse-ear cress).